The sequence spans 1675 residues: Clathrin heavy chain 1 (1675 aa).

Residue Ala-2 is modified to N-acetylalanine. Residues 2–479 (AQILPIRFQE…VDPTLALSVY (478 aa)) are globular terminal domain. WD40-like repeat regions lie at residues 24-67 (NIGF…RPIS), 68-107 (ADSA…MTDD), 108-149 (VTFW…SSLA), 150-195 (GCQI…QPIE), 196-257 (GHAA…PEAQ), 258-301 (NDFP…ISGE), and 302-330 (TIFV…VCVE). Ser-67 carries the post-translational modification Phosphoserine. Thr-105 bears the Phosphothreonine mark. At Tyr-184 the chain carries Phosphotyrosine. The residue at position 394 (Thr-394) is a Phosphothreonine. The segment at 449–465 (EKWLKEDKLECSEELGD) is binding site for the uncoating ATPase, involved in lattice disassembly. Positions 480–523 (LRANVPNKVIQCFAETGQVQKIVLYAKKVGYTPDWIFLLRNVMR) are flexible linker. The distal segment stretch occupies residues 524–634 (ISPDQGQQFA…RALEHFTDLY (111 aa)). The heavy chain arm stretch occupies residues 524-1675 (ISPDQGQQFA…QPQPGFGYSM (1152 aa)). 7 CHCR repeats span residues 537–683 (VQDE…QICV), 686–828 (ASKY…SEDV), 833–972 (ILVV…PLID), 979–1124 (LSET…VKEA), 1128–1269 (YIKA…FRLA), 1274–1420 (LHIV…LLLN), and 1423–1566 (LMVL…RECF). Residue Tyr-634 is modified to Phosphotyrosine. Positions 639–1675 (AVVHTHLLNP…QPQPGFGYSM (1037 aa)) are proximal segment. At Lys-737 the chain carries N6-succinyllysine. At Lys-856 the chain carries N6-acetyllysine. Tyr-899 bears the Phosphotyrosine mark. Ser-1167 bears the Phosphoserine mark. Tyr-1206 is modified (phosphotyrosine). Residues 1213–1522 (AAKLLYNNVS…YLFKGNNRWK (310 aa)) are involved in binding clathrin light chain. A Phosphoserine modification is found at Ser-1229. At Lys-1441 the chain carries N6-acetyllysine; alternate. An N6-succinyllysine; alternate modification is found at Lys-1441. A phosphotyrosine mark is found at Tyr-1477 and Tyr-1487. At Ser-1494 the chain carries Phosphoserine. Position 1501 is an N6-acetyllysine (Lys-1501). A trimerization region spans residues 1550 to 1675 (AEELLQWFLQ…QPQPGFGYSM (126 aa)).

The protein belongs to the clathrin heavy chain family. Clathrin triskelions, composed of 3 heavy chains and 3 light chains, are the basic subunits of the clathrin coat. In the presence of light chains, hub assembly is influenced by both the pH and the concentration of calcium. Interacts with HIP1. Interacts with DENND1A, DENND1B and DENND1C. Interacts with OCRL. Interacts with ERBB2. Interacts with FKBP6. Interacts with CKAP5 and TACC3 forming the TACC3/ch-TOG/clathrin complex located at spindle inter-microtubules bridges; the complex implicates clathrin triskelions; TACC3 and CLTC are proposed to form a composite microtubule interaction surface. Interacts with ATG16L1 (via N-terminus). Interacts with RFTN1; the interaction occurs in response to pathogens. Interacts with TMEM106B (via N-terminus). Interacts with DNAJC6; this interaction produces a local change in heavy-chain contacts, creating a detectable global distortion of the clathrin coat and leads to the recruitment of HSPA8.

The protein localises to the cytoplasmic vesicle membrane. The protein resides in the membrane. It localises to the coated pit. It is found in the melanosome. Its subcellular location is the cytoplasm. The protein localises to the cytoskeleton. The protein resides in the spindle. Clathrin is the major protein of the polyhedral coat of coated pits and vesicles. Two different adapter protein complexes link the clathrin lattice either to the plasma membrane or to the trans-Golgi network. Acts as a component of the TACC3/ch-TOG/clathrin complex proposed to contribute to stabilization of kinetochore fibers of the mitotic spindle by acting as inter-microtubule bridge. The TACC3/ch-TOG/clathrin complex is required for the maintenance of kinetochore fiber tension. Plays a role in early autophagosome formation. Interaction with DNAJC6 mediates the recruitment of HSPA8 to the clathrin lattice and creates local destabilization of the lattice promoting uncoating. This is Clathrin heavy chain 1 from Bos taurus (Bovine).